A 267-amino-acid chain; its full sequence is Hydroxyethylthiazole kinase 2 (267 aa).

Position 41 (Met-41) interacts with substrate. Residues Lys-116 and Thr-166 each coordinate ATP. Residue Gly-193 coordinates substrate.

This sequence belongs to the Thz kinase family. The cofactor is Mg(2+).

The enzyme catalyses 5-(2-hydroxyethyl)-4-methylthiazole + ATP = 4-methyl-5-(2-phosphooxyethyl)-thiazole + ADP + H(+). It functions in the pathway cofactor biosynthesis; thiamine diphosphate biosynthesis; 4-methyl-5-(2-phosphoethyl)-thiazole from 5-(2-hydroxyethyl)-4-methylthiazole: step 1/1. Functionally, catalyzes the phosphorylation of the hydroxyl group of 4-methyl-5-beta-hydroxyethylthiazole (THZ). This is Hydroxyethylthiazole kinase 2 from Streptococcus pneumoniae (strain Taiwan19F-14).